We begin with the raw amino-acid sequence, 98 residues long: Small ribosomal subunit protein bS20 (98 aa).

Belongs to the bacterial ribosomal protein bS20 family.

Its function is as follows. Binds directly to 16S ribosomal RNA. In Synechococcus sp. (strain CC9902), this protein is Small ribosomal subunit protein bS20.